Here is a 1422-residue protein sequence, read N- to C-terminus: YEATS domain-containing protein 2 (1422 aa).

Residue Lys-9 forms a Glycyl lysine isopeptide (Lys-Gly) (interchain with G-Cter in SUMO2) linkage. Residues 47 to 80 (KEQFALEMKNKEHEIEVIDQRLIEARRMMDKLRA) adopt a coiled-coil conformation. Residue Lys-113 forms a Glycyl lysine isopeptide (Lys-Gly) (interchain with G-Cter in SUMO2) linkage. Positions 117 to 198 (ESPSRSSSPA…KTEQRNADLT (82 aa)) are disordered. Ser-118, Ser-120, and Ser-157 each carry phosphoserine. A compositionally biased stretch (polar residues) spans 119–148 (PSRSSSPANQRAETPSANHSESDSLSQHND). Residues 149-165 (FLSDKDNNSNMDIEERL) are compositionally biased toward basic and acidic residues. A compositionally biased stretch (polar residues) spans 166-176 (SNNMEQRPSRN). Residues 177–198 (TGRDTSRITGSHKTEQRNADLT) are compositionally biased toward basic and acidic residues. A Glycyl lysine isopeptide (Lys-Gly) (interchain with G-Cter in SUMO2) cross-link involves residue Lys-189. A YEATS domain is found at 200–345 (ETSRLFVKKT…EDCIYPQSSE (146 aa)). Histone H3K27cr binding stretches follow at residues 259 to 261 (HPS) and 282 to 284 (WGE). Lys-370 is covalently cross-linked (Glycyl lysine isopeptide (Lys-Gly) (interchain with G-Cter in SUMO2)). Residue Thr-407 is modified to Phosphothreonine. A phosphoserine mark is found at Ser-447, Ser-463, Ser-465, Ser-471, and Ser-473. The disordered stretch occupies residues 465–486 (SPISTPSPSPLPRTPTSTPVHV). Thr-478 is subject to Phosphothreonine. Lys-487 participates in a covalent cross-link: Glycyl lysine isopeptide (Lys-Gly) (interchain with G-Cter in SUMO2). A compositionally biased stretch (polar residues) spans 513-535 (TTPSTGSPTNKISTASQVSQGTG). Residues 513–540 (TTPSTGSPTNKISTASQVSQGTGSPVPK) form a disordered region. Ser-536 carries the phosphoserine modification. Residue Lys-552 forms a Glycyl lysine isopeptide (Lys-Gly) (interchain with G-Cter in SUMO2) linkage. The residue at position 575 (Ser-575) is a Phosphoserine. Lys-592 is covalently cross-linked (Glycyl lysine isopeptide (Lys-Gly) (interchain with G-Cter in SUMO2)). Ser-627 bears the Phosphoserine mark. Glycyl lysine isopeptide (Lys-Gly) (interchain with G-Cter in SUMO2) cross-links involve residues Lys-649 and Lys-773. The disordered stretch occupies residues 794–842 (GSAASGGSGAGGGGGGGGGGGSGSGGGGSTGGGGGTAGGGTQSTAGPGG). Positions 797 to 842 (ASGGSGAGGGGGGGGGGGSGSGGGGSTGGGGGTAGGGTQSTAGPGG) are enriched in gly residues. Residue Lys-923 forms a Glycyl lysine isopeptide (Lys-Gly) (interchain with G-Cter in SUMO2) linkage. A Glycyl lysine isopeptide (Lys-Gly) (interchain with G-Cter in SUMO1); alternate cross-link involves residue Lys-1110. A Glycyl lysine isopeptide (Lys-Gly) (interchain with G-Cter in SUMO2); alternate cross-link involves residue Lys-1110. A Glycyl lysine isopeptide (Lys-Gly) (interchain with G-Cter in SUMO2) cross-link involves residue Lys-1130. Residue Thr-1219 is modified to Phosphothreonine. Residues Lys-1222 and Lys-1285 each participate in a glycyl lysine isopeptide (Lys-Gly) (interchain with G-Cter in SUMO2) cross-link.

Component of the ADA2A-containing complex (ATAC), composed of KAT14, KAT2A, TADA2L, TADA3L, ZZ3, MBIP, WDR5, YEATS2, SGF29 and DR1.

The protein localises to the nucleus. Functionally, chromatin reader component of the ATAC complex, a complex with histone acetyltransferase activity on histones H3 and H4. YEATS2 specifically recognizes and binds histone H3 crotonylated at 'Lys-27' (H3K27cr). Crotonylation marks active promoters and enhancers and confers resistance to transcriptional repressors. This chain is YEATS domain-containing protein 2, found in Homo sapiens (Human).